Reading from the N-terminus, the 343-residue chain is Programmed cell death protein 2 (343 aa).

Residues C134, C137, C145, C148, C154, H158, H167, and C171 each coordinate Zn(2+). The MYND-type; atypical zinc finger occupies 134-171; it reads CRVCGCLAPMTCSRCKQAHYCSKEHQTLDWRLGHKQAC.

Ubiquitinated by PRKN, promoting proteasomal degradation.

It is found in the nucleus. Its function is as follows. May be a DNA-binding protein with a regulatory function. May play an important role in cell death and/or in regulation of cell proliferation. This Mus musculus (Mouse) protein is Programmed cell death protein 2 (Pdcd2).